Reading from the N-terminus, the 316-residue chain is Probable cell division protein WhiA (316 aa).

A DNA-binding region (H-T-H motif) is located at residues 275–309 (TLKELGEMVSGGKISKSGINHRLRKIDDIAEKLRA).

It belongs to the WhiA family.

Involved in cell division and chromosome segregation. The chain is Probable cell division protein WhiA from Bacillus anthracis (strain CDC 684 / NRRL 3495).